Here is a 449-residue protein sequence, read N- to C-terminus: Ribosomal protein uS12 methylthiotransferase RimO (449 aa).

Residues 16–126 (PKISFVSLGC…VMEAVHAAIA (111 aa)) enclose the MTTase N-terminal domain. 6 residues coordinate [4Fe-4S] cluster: Cys-25, Cys-61, Cys-90, Cys-157, Cys-161, and Cys-164. The Radical SAM core domain maps to 143–381 (LTPRHYAYLK…MEHQQKISAR (239 aa)). The region spanning 384 to 449 (REKIGKHVSV…DAYDLHGKAV (66 aa)) is the TRAM domain.

Belongs to the methylthiotransferase family. RimO subfamily. [4Fe-4S] cluster is required as a cofactor.

It is found in the cytoplasm. The catalysed reaction is L-aspartate(89)-[ribosomal protein uS12]-hydrogen + (sulfur carrier)-SH + AH2 + 2 S-adenosyl-L-methionine = 3-methylsulfanyl-L-aspartate(89)-[ribosomal protein uS12]-hydrogen + (sulfur carrier)-H + 5'-deoxyadenosine + L-methionine + A + S-adenosyl-L-homocysteine + 2 H(+). In terms of biological role, catalyzes the methylthiolation of an aspartic acid residue of ribosomal protein uS12. This Beijerinckia indica subsp. indica (strain ATCC 9039 / DSM 1715 / NCIMB 8712) protein is Ribosomal protein uS12 methylthiotransferase RimO.